Consider the following 229-residue polypeptide: Probable transmembrane reductase CYB561D1 (229 aa).

At Met1 to Arg24 the chain is on the cytoplasmic side. In terms of domain architecture, Cytochrome b561 spans Leu22–Arg224. A helical transmembrane segment spans residues Gly25–Ser45. At Arg46–Ser53 the chain is on the lumenal side. A helical membrane pass occupies residues Trp54–Phe74. His55 is a binding site for heme b. The Cytoplasmic segment spans residues Ser75 to Arg91. A helical transmembrane segment spans residues Leu92–Ile112. Heme b is bound by residues His93 and His127. Topologically, residues Ser113–Ser128 are lumenal. Residues Trp129–Leu149 traverse the membrane as a helical segment. The Cytoplasmic portion of the chain corresponds to Cys150 to Cys169. Residue His166 participates in heme b binding. The helical transmembrane segment at Gly170–Phe190 threads the bilayer. Over Gln191–Gln193 the chain is Lumenal. The helical transmembrane segment at Ile194–Met214 threads the bilayer. Topologically, residues His215–Met229 are cytoplasmic.

Heme b is required as a cofactor.

The protein localises to the membrane. It catalyses the reaction monodehydro-L-ascorbate radical(out) + L-ascorbate(in) = monodehydro-L-ascorbate radical(in) + L-ascorbate(out). It carries out the reaction Fe(3+)(out) + L-ascorbate(in) = monodehydro-L-ascorbate radical(in) + Fe(2+)(out) + H(+). Probable transmembrane reductase that may use ascorbate as an electron donor and transfer electrons across membranes to reduce monodehydro-L-ascorbate radical and iron cations Fe(3+) in another cellular compartment. The sequence is that of Probable transmembrane reductase CYB561D1 from Homo sapiens (Human).